Here is a 128-residue protein sequence, read N- to C-terminus: Small ribosomal subunit protein uS11 (128 aa).

It belongs to the universal ribosomal protein uS11 family. As to quaternary structure, part of the 30S ribosomal subunit. Interacts with proteins S7 and S18. Binds to IF-3.

Functionally, located on the platform of the 30S subunit, it bridges several disparate RNA helices of the 16S rRNA. Forms part of the Shine-Dalgarno cleft in the 70S ribosome. This chain is Small ribosomal subunit protein uS11, found in Chloroherpeton thalassium (strain ATCC 35110 / GB-78).